The sequence spans 348 residues: Phosphoribosylformylglycinamidine cyclo-ligase (348 aa).

Belongs to the AIR synthase family.

The protein localises to the cytoplasm. The enzyme catalyses 2-formamido-N(1)-(5-O-phospho-beta-D-ribosyl)acetamidine + ATP = 5-amino-1-(5-phospho-beta-D-ribosyl)imidazole + ADP + phosphate + H(+). It functions in the pathway purine metabolism; IMP biosynthesis via de novo pathway; 5-amino-1-(5-phospho-D-ribosyl)imidazole from N(2)-formyl-N(1)-(5-phospho-D-ribosyl)glycinamide: step 2/2. The polypeptide is Phosphoribosylformylglycinamidine cyclo-ligase (Geobacter sulfurreducens (strain ATCC 51573 / DSM 12127 / PCA)).